The primary structure comprises 54 residues: Large ribosomal subunit protein bL33C (54 aa).

This sequence belongs to the bacterial ribosomal protein bL33 family.

The sequence is that of Large ribosomal subunit protein bL33C from Streptomyces griseus subsp. griseus (strain JCM 4626 / CBS 651.72 / NBRC 13350 / KCC S-0626 / ISP 5235).